We begin with the raw amino-acid sequence, 62 residues long: MQKLFIVLVLFCILRLDAEVDGLTVSLCNQSECQEKCKKENKNGKCIQEIELNWVYNICKCF.

The signal sequence occupies residues 1 to 18 (MQKLFIVLVLFCILRLDA). Cystine bridges form between Cys-28-Cys-46, Cys-33-Cys-59, and Cys-37-Cys-61.

This sequence belongs to the short scorpion toxin superfamily. Potassium channel inhibitor family. Alpha-KTx 23 subfamily. As to expression, expressed by the venom gland.

It localises to the secreted. In terms of biological role, may block potassium channels. This is Potassium channel toxin alpha-KTx Tx790 from Buthus israelis (Israeli scorpion).